The following is a 257-amino-acid chain: tRNA (guanine-N(1)-)-methyltransferase (257 aa).

S-adenosyl-L-methionine-binding positions include Gly113 and 133–138 (IGDYVL).

Belongs to the RNA methyltransferase TrmD family. In terms of assembly, homodimer.

The protein localises to the cytoplasm. The catalysed reaction is guanosine(37) in tRNA + S-adenosyl-L-methionine = N(1)-methylguanosine(37) in tRNA + S-adenosyl-L-homocysteine + H(+). Functionally, specifically methylates guanosine-37 in various tRNAs. The sequence is that of tRNA (guanine-N(1)-)-methyltransferase from Cronobacter sakazakii (strain ATCC BAA-894) (Enterobacter sakazakii).